The chain runs to 424 residues: Serine--tRNA ligase (424 aa).

Residue 230 to 232 (TAE) coordinates L-serine. 261 to 263 (RAE) is a binding site for ATP. Glu284 contacts L-serine. 348–351 (EISS) contributes to the ATP binding site. Residue Ser384 coordinates L-serine.

It belongs to the class-II aminoacyl-tRNA synthetase family. Type-1 seryl-tRNA synthetase subfamily. In terms of assembly, homodimer. The tRNA molecule binds across the dimer.

It is found in the cytoplasm. It catalyses the reaction tRNA(Ser) + L-serine + ATP = L-seryl-tRNA(Ser) + AMP + diphosphate + H(+). The enzyme catalyses tRNA(Sec) + L-serine + ATP = L-seryl-tRNA(Sec) + AMP + diphosphate + H(+). Its pathway is aminoacyl-tRNA biosynthesis; selenocysteinyl-tRNA(Sec) biosynthesis; L-seryl-tRNA(Sec) from L-serine and tRNA(Sec): step 1/1. In terms of biological role, catalyzes the attachment of serine to tRNA(Ser). Is also able to aminoacylate tRNA(Sec) with serine, to form the misacylated tRNA L-seryl-tRNA(Sec), which will be further converted into selenocysteinyl-tRNA(Sec). This Desulforamulus reducens (strain ATCC BAA-1160 / DSM 100696 / MI-1) (Desulfotomaculum reducens) protein is Serine--tRNA ligase.